Here is a 1728-residue protein sequence, read N- to C-terminus: Hybrid PKS-NRPS synthetase TAS1 (1728 aa).

The segment at Ser-153–Val-499 is condensation (C) domain. Residues Lys-608 to Asn-1002 form an adenylation (A) domain region. The 79-residue stretch at Met-1141–Val-1219 folds into the Carrier domain. At Ser-1177 the chain carries O-(pantetheine 4'-phosphoryl)serine. Positions Leu-1225–Val-1256 are disordered. Composition is skewed to low complexity over residues Gly-1226–Ser-1237 and Glu-1244–Ser-1255. Residues Arg-1262–Thr-1714 enclose the Ketosynthase family 3 (KS3) domain. Residues Cys-1436, His-1579, and Asn-1633 each act as for beta-ketoacyl synthase activity in the active site.

This sequence in the N-terminal section; belongs to the NRP synthetase family. It depends on pantetheine 4'-phosphate as a cofactor.

It carries out the reaction acetoacetyl-CoA + L-isoleucine + ATP = tenuazonic acid + AMP + diphosphate + CoA + 2 H(+). In terms of biological role, hybrid PKS-NRPS synthetase that mediates the biosynthesis of the toxin tenuazonic acid (TeA), an inhibitor of protein biosynthesis on ribosomes by suppressing the release of new protein. TAS1 alone is sufficient for TeA synthesis via the condensation of isoleucine (Ile) with acetoacetyl-CoA by the N-terminal NRPS module and subsequent cyclization conducted by the C-terminal KS domain. This Pyricularia oryzae (strain 70-15 / ATCC MYA-4617 / FGSC 8958) (Rice blast fungus) protein is Hybrid PKS-NRPS synthetase TAS1.